The sequence spans 169 residues: ATP synthase subunit b (169 aa).

The helical transmembrane segment at 12 to 32 (HIYLGNALWYLICFAILLLLI) threads the bilayer.

It belongs to the ATPase B chain family. As to quaternary structure, F-type ATPases have 2 components, F(1) - the catalytic core - and F(0) - the membrane proton channel. F(1) has five subunits: alpha(3), beta(3), gamma(1), delta(1), epsilon(1). F(0) has three main subunits: a(1), b(2) and c(10-14). The alpha and beta chains form an alternating ring which encloses part of the gamma chain. F(1) is attached to F(0) by a central stalk formed by the gamma and epsilon chains, while a peripheral stalk is formed by the delta and b chains.

Its subcellular location is the cell membrane. Its function is as follows. F(1)F(0) ATP synthase produces ATP from ADP in the presence of a proton or sodium gradient. F-type ATPases consist of two structural domains, F(1) containing the extramembraneous catalytic core and F(0) containing the membrane proton channel, linked together by a central stalk and a peripheral stalk. During catalysis, ATP synthesis in the catalytic domain of F(1) is coupled via a rotary mechanism of the central stalk subunits to proton translocation. In terms of biological role, component of the F(0) channel, it forms part of the peripheral stalk, linking F(1) to F(0). The sequence is that of ATP synthase subunit b from Lactobacillus helveticus (strain DPC 4571).